The primary structure comprises 356 residues: uncharacterized protein (356 aa).

A signal peptide spans 1–21; sequence MHWSRFVGIFLVFSVFSLVNC. The tract at residues 293–317 is disordered; that stretch reads RPETDYEGANLPNIPSKKGSANQPV.

This is an uncharacterized protein from Acanthamoeba polyphaga mimivirus (APMV).